A 230-amino-acid chain; its full sequence is Proteasome subunit alpha (230 aa).

This sequence belongs to the peptidase T1A family. The 20S proteasome core is composed of 14 alpha and 14 beta subunits that assemble into four stacked heptameric rings, resulting in a barrel-shaped structure. The two inner rings, each composed of seven catalytic beta subunits, are sandwiched by two outer rings, each composed of seven alpha subunits. The catalytic chamber with the active sites is on the inside of the barrel. Has a gated structure, the ends of the cylinder being occluded by the N-termini of the alpha-subunits. Is capped by the proteasome-associated ATPase, ARC.

It is found in the cytoplasm. Its pathway is protein degradation; proteasomal Pup-dependent pathway. With respect to regulation, the formation of the proteasomal ATPase ARC-20S proteasome complex, likely via the docking of the C-termini of ARC into the intersubunit pockets in the alpha-rings, may trigger opening of the gate for substrate entry. Interconversion between the open-gate and close-gate conformations leads to a dynamic regulation of the 20S proteasome proteolysis activity. Its function is as follows. Component of the proteasome core, a large protease complex with broad specificity involved in protein degradation. The sequence is that of Proteasome subunit alpha from Thermomonospora curvata (strain ATCC 19995 / DSM 43183 / JCM 3096 / KCTC 9072 / NBRC 15933 / NCIMB 10081 / Henssen B9).